A 273-amino-acid chain; its full sequence is Proteasome subunit beta (273 aa).

A propeptide spans 1–50 (MRKDGARLALPLFDPRHDPGPDFAALVSRDAARTVPTSGDGSLGAQVPHG) (removed in mature form; by autocatalysis). Threonine 51 functions as the Nucleophile in the catalytic mechanism.

The protein belongs to the peptidase T1B family. In terms of assembly, the 20S proteasome core is composed of 14 alpha and 14 beta subunits that assemble into four stacked heptameric rings, resulting in a barrel-shaped structure. The two inner rings, each composed of seven catalytic beta subunits, are sandwiched by two outer rings, each composed of seven alpha subunits. The catalytic chamber with the active sites is on the inside of the barrel. Has a gated structure, the ends of the cylinder being occluded by the N-termini of the alpha-subunits. Is capped by the proteasome-associated ATPase, ARC.

Its subcellular location is the cytoplasm. The enzyme catalyses Cleavage of peptide bonds with very broad specificity.. It participates in protein degradation; proteasomal Pup-dependent pathway. The formation of the proteasomal ATPase ARC-20S proteasome complex, likely via the docking of the C-termini of ARC into the intersubunit pockets in the alpha-rings, may trigger opening of the gate for substrate entry. Interconversion between the open-gate and close-gate conformations leads to a dynamic regulation of the 20S proteasome proteolysis activity. Its function is as follows. Component of the proteasome core, a large protease complex with broad specificity involved in protein degradation. This chain is Proteasome subunit beta, found in Acidimicrobium ferrooxidans (strain DSM 10331 / JCM 15462 / NBRC 103882 / ICP).